Reading from the N-terminus, the 378-residue chain is Probable S-(hydroxymethyl)glutathione dehydrogenase 1 (378 aa).

Zn(2+) is bound at residue Cys-47. His-48 is a binding site for NAD(+). 7 residues coordinate Zn(2+): His-69, Glu-70, Cys-99, Cys-102, Cys-105, Cys-113, and Cys-176. NAD(+) is bound by residues 201 to 206 (GCGCVG), Asp-225, 293 to 295 (IGV), and 318 to 320 (SAF).

This sequence belongs to the zinc-containing alcohol dehydrogenase family. Class-III subfamily. Requires Zn(2+) as cofactor.

The catalysed reaction is a primary alcohol + NAD(+) = an aldehyde + NADH + H(+). It catalyses the reaction a secondary alcohol + NAD(+) = a ketone + NADH + H(+). It carries out the reaction S-(hydroxymethyl)glutathione + NADP(+) = S-formylglutathione + NADPH + H(+). The enzyme catalyses S-(hydroxymethyl)glutathione + NAD(+) = S-formylglutathione + NADH + H(+). The catalysed reaction is S-nitrosoglutathione + NADH + H(+) = S-(hydroxysulfenamide)glutathione + NAD(+). Its function is as follows. Oxidizes long-chain alcohols and, in the presence of glutathione, is able to oxidize formaldehyde. Also acts as a S-nitroso-glutathione reductase by catalyzing the NADH-dependent reduction of S-nitrosoglutathione, thereby regulating protein S-nitrosylation. This Schizosaccharomyces pombe (strain 972 / ATCC 24843) (Fission yeast) protein is Probable S-(hydroxymethyl)glutathione dehydrogenase 1.